Consider the following 507-residue polypeptide: RNA demethylase ALKBH9B (507 aa).

2 disordered regions span residues 76–102 and 145–183; these read GSERASNNVDDNYDEKSENGEDCDNHS and QEDEFDEEEEEEEEERDSSRKGFDASSMKTPEKPKLSRD. Basic and acidic residues predominate over residues 89-100; it reads DEKSENGEDCDN. A compositionally biased stretch (acidic residues) spans 145–160; it reads QEDEFDEEEEEEEEER. Positions 174–183 are enriched in basic and acidic residues; the sequence is TPEKPKLSRD. Positions 317-414 constitute a Fe2OG dioxygenase domain; the sequence is VPDSCIVNIY…RISITFRKMD (98 aa). Fe cation contacts are provided by His-335, Asp-337, and His-396. A 2-oxoglutarate-binding site is contributed by Arg-405. The disordered stretch occupies residues 432-507; the sequence is EPLPLDLNRS…MPRPSRRNYG (76 aa). The segment covering 440-450 has biased composition (polar residues); the sequence is RSGSTSRFSRL. The span at 497–507 shows a compositional bias: basic residues; sequence GMPRPSRRNYG.

Belongs to the alkB family. (Microbial infection) Interacts with the capsid protein ORF3b of the alfalfa mosaic virus (AMV). Fe(2+) serves as cofactor.

It localises to the cytoplasm. The protein localises to the P-body. It is found in the cytoplasmic granule. The enzyme catalyses an N(6)-methyladenosine in mRNA + 2-oxoglutarate + O2 = an adenosine in mRNA + formaldehyde + succinate + CO2. Dioxygenase that demethylates RNA by oxidative demethylation: specifically demethylates N(6)-methyladenosine (m6A) RNA, the most prevalent internal modification of messenger RNA (mRNA) in higher eukaryotes. Modulates viral infection of the alfalfa mosaic virus (AMV) and the m6A abundance in its genomic RNAs. The protein is RNA demethylase ALKBH9B of Arabidopsis thaliana (Mouse-ear cress).